A 2715-amino-acid chain; its full sequence is Chromodomain-helicase-DNA-binding protein 6 (2715 aa).

The segment covering 1-11 has biased composition (basic and acidic residues); sequence MKMKIQKKEKQ. 2 disordered regions span residues 1-30 and 66-244; these read MKMK…SVNF and EEAA…QVKR. Residues 1–747 form a required for DNA-dependent ATPase activity region; that stretch reads MKMKIQKKEK…MMELRKCCNH (747 aa). Polar residues predominate over residues 12-27; it reads LSNLKVLNHSPMSDAS. Residues 123–172 show a composition bias toward basic and acidic residues; it reads EPKEPKEPRKAKEPKKAKEHKEPKQKDGAKKARKPREASGTKEAKEKRSC. Chromo domains are found at residues 292–343 and 375–439; these read NIIE…KDPR and VEVD…KHVE. The Helicase ATP-binding domain occupies 473–647; the sequence is LFNWYNRKNC…FSLLNFLEPS (175 aa). Position 486–493 (486–493) interacts with ATP; it reads DEMGLGKT. A DEAH box motif is present at residues 598-601; it reads DEAH. Residues 787 to 956 form the Helicase C-terminal domain; that stretch reads LIDKLLPKLI…LSKMEVEDLL (170 aa). Residues 1318–1390 are disordered; sequence KSLSAEQGVT…SDPDKSPWPV (73 aa). A compositionally biased stretch (polar residues) spans 1321–1330; it reads SAEQGVTDGT. Basic and acidic residues-rich tracts occupy residues 1333–1351 and 1367–1376; these read IPER…KVDG and FSEKKDDSRA. The region spanning 1449 to 1503 is the Myb-like domain; it reads RWTRREQADFYRTVSSFGVVYDQEKKTFDWTQFRIISRLDKKSDESLEQYFYSFV. Basic and acidic residues predominate over residues 2027 to 2038; the sequence is FENKDDYDRDGN. Disordered stretches follow at residues 2027–2063, 2116–2148, 2321–2351, 2373–2422, 2547–2602, and 2648–2715; these read FENK…ITGD, SQQY…AAEH, QATL…QAEK, PGFG…FLPE, TSTA…PAIT, and VGLE…NDTN. Residues 2116–2141 are compositionally biased toward polar residues; it reads SQQYEPSGTLPTPVLTSSAGSRTSLS. Residues 2329 to 2346 are compositionally biased toward low complexity; the sequence is PEGPGPATSAPEPATAAS. The segment covering 2547-2560 has biased composition (low complexity); the sequence is TSTAPASLSSTTKS. Basic and acidic residues-rich tracts occupy residues 2567–2588 and 2706–2715; these read KTAE…EDKP and ALKDSNNDTN.

It belongs to the SNF2/RAD54 helicase family. Interacts with NFE2L2; involved in activation of the transcription. In terms of assembly, (Microbial infection) Interacts with the influenza A polymerase complex composed fo PB1, PB2 and PA. As to quaternary structure, (Microbial infection) Interacts (via N-terminus) with human papillomavirus protein E8^E2C (via C-terminus); this interaction induces transcriptional repression of the viral genome. Widely expressed.

The protein resides in the nucleus. It localises to the nucleoplasm. The enzyme catalyses ATP + H2O = ADP + phosphate + H(+). ATP-dependent chromatin-remodeling factor. Regulates transcription by disrupting nucleosomes in a largely non-sliding manner which strongly increases the accessibility of chromatin; nucleosome disruption requires ATP. Activates transcription of specific genes in response to oxidative stress through interaction with NFE2L2. Its function is as follows. (Microbial infection) Acts as a transcriptional repressor of different viruses including influenza virus or papillomavirus. During influenza virus infection, the viral polymerase complex localizes CHD6 to inactive chromatin where it gets degraded in a proteasome independent-manner. The protein is Chromodomain-helicase-DNA-binding protein 6 (CHD6) of Homo sapiens (Human).